The chain runs to 361 residues: U7 snRNA-associated Sm-like protein LSm11 (361 aa).

Residues 1–26 form a disordered region; it reads MEEREWGARSARAGSPASPPSPRLDV. Phosphoserine is present on residues serine 15 and serine 21. Arginine 41 carries the omega-N-methylarginine modification. The tract at residues 67 to 142 is disordered; that stretch reads RTGRGRARGT…QGPGRSKKAP (76 aa). Residues 76–96 show a composition bias toward low complexity; that stretch reads TGEPASAGTSTGTSTGAGSSS. Residue lysine 121 forms a Glycyl lysine isopeptide (Lys-Gly) (interchain with G-Cter in SUMO2) linkage. The residue at position 155 (serine 155) is a Phosphoserine. Residues 155-230 enclose the Sm domain; it reads SPLGELHRCI…LTLTRLFDRL (76 aa). The tract at residues 172–205 is SM 1; it reads VHIRTFKGLRGVCTGFLVAFDKFWNMALTDVDET. The disordered stretch occupies residues 268–335; the sequence is RGDTDRSSHR…RKKKRKPKVD (68 aa). Serine 281 is modified (phosphoserine). Positions 307–323 are enriched in polar residues; it reads GSSVGGTFSRATTLSRG. The SM 2 stretch occupies residues 344-357; it reads INQIFIRGENVLLV.

This sequence belongs to the snRNP Sm proteins family. In terms of assembly, component of the heptameric ring U7 snRNP complex, or U7 Sm protein core complex, at least composed of LSM10, LSM11, SNRPB, SNRPD3, SNRPE, SNRPF, SNRPG and U7 snRNA. Formation of the U7 snRNP is an ATP-dependent process mediated by a specialized SMN complex containing at least the Sm protein core complex and additionally, the U7-specific LSM10 and LSM11 proteins. Identified in a histone pre-mRNA complex, at least composed of ERI1, LSM11, SLBP, SNRPB, SYNCRIP and YBX1. Interacts (via the Sm domains) with CLNS1A. Interacts with PRMT5, SMN, ZNF473 and WDR77. Not methylated.

It localises to the nucleus. Component of the U7 snRNP complex that is involved in the histone 3'-end pre-mRNA processing. Increases U7 snRNA levels but not histone 3'-end pre-mRNA processing activity, when overexpressed. Required for cell cycle progression from G1 to S phases. Binds specifically to the Sm-binding site of U7 snRNA. The polypeptide is U7 snRNA-associated Sm-like protein LSm11 (Mus musculus (Mouse)).